The primary structure comprises 217 residues: Small ribosomal subunit protein uS3 (217 aa).

Residues 38–106 (IRKFIDNELK…KVHINVIEIK (69 aa)) form the KH type-2 domain.

This sequence belongs to the universal ribosomal protein uS3 family. Part of the 30S ribosomal subunit. Forms a tight complex with proteins S10 and S14.

Its function is as follows. Binds the lower part of the 30S subunit head. Binds mRNA in the 70S ribosome, positioning it for translation. This Staphylococcus aureus (strain COL) protein is Small ribosomal subunit protein uS3 (rpsC).